A 276-amino-acid polypeptide reads, in one-letter code: MIKPKIALTIAGTDPTGGAGVMADLKSFHSCGVYGMGVVTSIVAQNTLGVQHIHNLNHQWVDEQLDSVFNDTLPHAIKTGMIATADTMETIRHYLMQHESIPYVIDPVMLAKSGDSLMDNDTKQNLQHTLLPLADVVTPNLPEAEEITGLTIDSEEKIMQAGRIFINEIGSKGVIIKGGHSNDTDIAKDYLFTNEGVQTFENERFKTKHTHGTGCTFSAVITAELAKGRRLFEAVHKAKKFISMSIQYTPEIGRGRGPVNHFAYLKKEGLDDELSK.

Residue Q45 coordinates 4-amino-5-hydroxymethyl-2-methylpyrimidine.

It belongs to the ThiD family.

It carries out the reaction 4-amino-5-hydroxymethyl-2-methylpyrimidine + ATP = 4-amino-2-methyl-5-(phosphooxymethyl)pyrimidine + ADP + H(+). The enzyme catalyses 4-amino-2-methyl-5-(phosphooxymethyl)pyrimidine + ATP = 4-amino-2-methyl-5-(diphosphooxymethyl)pyrimidine + ADP. Its pathway is cofactor biosynthesis; thiamine diphosphate biosynthesis; 4-amino-2-methyl-5-diphosphomethylpyrimidine from 5-amino-1-(5-phospho-D-ribosyl)imidazole: step 2/3. It functions in the pathway cofactor biosynthesis; thiamine diphosphate biosynthesis; 4-amino-2-methyl-5-diphosphomethylpyrimidine from 5-amino-1-(5-phospho-D-ribosyl)imidazole: step 3/3. Functionally, catalyzes the phosphorylation of hydroxymethylpyrimidine phosphate (HMP-P) to HMP-PP, and of HMP to HMP-P. This is Hydroxymethylpyrimidine/phosphomethylpyrimidine kinase (thiD) from Staphylococcus aureus (strain MSSA476).